The sequence spans 206 residues: Uracil phosphoribosyltransferase (206 aa).

5-phospho-alpha-D-ribose 1-diphosphate-binding positions include Arg76, Arg101, and 128–136 (DPMLATGGS). Uracil contacts are provided by residues Ile191 and 196 to 198 (GDA). Residue Asp197 participates in 5-phospho-alpha-D-ribose 1-diphosphate binding.

This sequence belongs to the UPRTase family. Mg(2+) is required as a cofactor.

The catalysed reaction is UMP + diphosphate = 5-phospho-alpha-D-ribose 1-diphosphate + uracil. It participates in pyrimidine metabolism; UMP biosynthesis via salvage pathway; UMP from uracil: step 1/1. Allosterically activated by GTP. Functionally, catalyzes the conversion of uracil and 5-phospho-alpha-D-ribose 1-diphosphate (PRPP) to UMP and diphosphate. The polypeptide is Uracil phosphoribosyltransferase (Malacoplasma penetrans (strain HF-2) (Mycoplasma penetrans)).